The chain runs to 400 residues: MIIKPRVRGFICVTTHPVGCEANVKEQIDYVTSHGPIANGPKKVLVIGASTGYGLAARISAAFGSGADTLGVFFERAGSDTKPGTAGWYNSAAFEKFAAEKGLYARSINGDAFSDKVKQITIDTIKQDLGKVDLVVYSLAAPRRTHPKTGETISSTLKPVGKSVTFRGLDTDKETIREVTLEPATQEEIDGTVAVMGGEDWQMWIDALADAGVLADGAKTTAFTYLGEQITHDIYWNGSIGEAKKDLDKKVVSIREKLAVHGGDARVSVLKAVVTQASSAIPMMPLYLSLLFKVMKEKGTHEGCIEQVYGLLKDSMYGATPHIDEEGRLRADYKELDPQVQAQVVAMWDKVTNDNLYEMTDFAGYKTEFLRLFGFEIAGVDYDADVNPDVKIPGIIDTTA.

Residues 48-53 (GASTGY), 74-75 (FE), 111-112 (DA), and 139-140 (LA) each bind NAD(+). Residue Y225 coordinates substrate. The Proton donor role is filled by Y235. Residues K244 and 273–275 (VVT) contribute to the NAD(+) site.

The protein belongs to the TER reductase family. Monomer.

The enzyme catalyses a 2,3-saturated acyl-[ACP] + NAD(+) = a (2E)-enoyl-[ACP] + NADH + H(+). The protein operates within lipid metabolism; fatty acid biosynthesis. Its function is as follows. Involved in the final reduction of the elongation cycle of fatty acid synthesis (FAS II). Catalyzes the reduction of a carbon-carbon double bond in an enoyl moiety that is covalently linked to an acyl carrier protein (ACP). The protein is Enoyl-[acyl-carrier-protein] reductase [NADH] of Burkholderia vietnamiensis (strain G4 / LMG 22486) (Burkholderia cepacia (strain R1808)).